Here is a 188-residue protein sequence, read N- to C-terminus: Segregation and condensation protein B (188 aa).

The protein belongs to the ScpB family. As to quaternary structure, homodimer. Homodimerization may be required to stabilize the binding of ScpA to the Smc head domains. Component of a cohesin-like complex composed of ScpA, ScpB and the Smc homodimer, in which ScpA and ScpB bind to the head domain of Smc. The presence of the three proteins is required for the association of the complex with DNA.

It is found in the cytoplasm. Its function is as follows. Participates in chromosomal partition during cell division. May act via the formation of a condensin-like complex containing Smc and ScpA that pull DNA away from mid-cell into both cell halves. The sequence is that of Segregation and condensation protein B from Lactococcus lactis subsp. lactis (strain IL1403) (Streptococcus lactis).